Consider the following 439-residue polypeptide: Probable E3 ubiquitin-protein ligase makorin-1 (439 aa).

C3H1-type zinc fingers lie at residues 18–45 (WTKH…HDLS), 48–74 (KQTM…HTKP), and 163–190 (EMKK…HGDV). The segment at 73–118 (KPSKQDEVPSSKPSMPLTAAPLAGTPEPVSDGPGGTTGAQEKPQGS) is disordered. A makorin-type Cys-His region spans residues 191 to 218 (CDMCGLQVLHPSDTSQRSQHIRACIEAH). The RING-type zinc finger occupies 236 to 290 (CGVCMEVVFEKTNPSERRFGILSNCCHCYCLKCIRKWRSAKQFESKIIKSCPECR). A C3H1-type 4 zinc finger spans residues 319 to 348 (GMGTKPCRYFDEGRGTCPFGANCFYKHAFP). The segment at 352–371 (LEEPQPQRRQNGSNGRNRNT) is disordered. Positions 358-368 (QRRQNGSNGRN) are enriched in low complexity.

It carries out the reaction S-ubiquitinyl-[E2 ubiquitin-conjugating enzyme]-L-cysteine + [acceptor protein]-L-lysine = [E2 ubiquitin-conjugating enzyme]-L-cysteine + N(6)-ubiquitinyl-[acceptor protein]-L-lysine.. The protein operates within protein modification; protein ubiquitination. Functionally, E3 ubiquitin ligase catalyzing the covalent attachment of ubiquitin moieties onto substrate proteins. The sequence is that of Probable E3 ubiquitin-protein ligase makorin-1 from Danio rerio (Zebrafish).